The primary structure comprises 81 residues: Serine protease inhibitor Kazal-type 2 (81 aa).

The N-terminal stretch at 1-21 (MALAVLRLALLLLAVTFAGPL) is a signal peptide. Positions 27 to 81 (KYKTPFCARYQLPGCPRDFNPVCGTDMITYPNECTLCMKIRESGQNIKILRRGPC) constitute a Kazal-like domain. 3 disulfide bridges follow: Cys33–Cys63, Cys41–Cys60, and Cys49–Cys81.

In terms of tissue distribution, more abundant in epididymis than in testis.

Its subcellular location is the secreted. The protein localises to the cytoplasmic vesicle. The protein resides in the secretory vesicle. It localises to the acrosome. Strong inhibitor of acrosin in male and/or female genital tract. Also inhibits trypsin. In terms of biological role, as a strong inhibitor of acrosin, it is required for normal spermiogenesis. It probably hinders premature activation of proacrosin and other proteases, thus preventing the cascade of events leading to spermiogenesis defects. May be involved in the regulation of serine protease-dependent germ cell apoptosis. It also inhibits trypsin. The sequence is that of Serine protease inhibitor Kazal-type 2 (SPINK2) from Macaca fascicularis (Crab-eating macaque).